The primary structure comprises 680 residues: Potassium-transporting ATPase ATP-binding subunit (680 aa).

4 helical membrane passes run 37–57 (VIFVTEAMAALVTLFFVLDVA), 69–89 (IAAWLWFTVLFATFAEAVAEG), 223–243 (ILLSGLTLIFLIAVVTLWGLA), and 257–277 (ALLVTLIPTTIGGLLSAIGIA). The active-site 4-aspartylphosphate intermediate is the Asp-307. ATP-binding positions include Asp-344, Glu-348, 375-382 (FTAETRLS), and Lys-393. Residues Asp-516 and Asp-520 each coordinate Mg(2+). 3 consecutive transmembrane segments (helical) span residues 586–606 (FAIIPALFVTTYPALGVLNIM), 614–634 (AILSAVIFNALIIVALIPLAL), and 652–672 (LLVYGLGGLVLPFAGIKLIDL).

It belongs to the cation transport ATPase (P-type) (TC 3.A.3) family. Type IA subfamily. As to quaternary structure, the system is composed of three essential subunits: KdpA, KdpB and KdpC.

The protein resides in the cell inner membrane. It carries out the reaction K(+)(out) + ATP + H2O = K(+)(in) + ADP + phosphate + H(+). Part of the high-affinity ATP-driven potassium transport (or Kdp) system, which catalyzes the hydrolysis of ATP coupled with the electrogenic transport of potassium into the cytoplasm. This subunit is responsible for energy coupling to the transport system and for the release of the potassium ions to the cytoplasm. The polypeptide is Potassium-transporting ATPase ATP-binding subunit (Rhizobium meliloti (strain 1021) (Ensifer meliloti)).